Consider the following 620-residue polypeptide: Transcription factor kayak (620 aa).

2 disordered regions span residues 1–36 and 184–288; these read MKVKVERTTITKKTTTTKPKPDEEDNNDDNSSSNGV and SDTD…EKRR. Polar residues predominate over residues 184-194; sequence SDTDDSNASWN. 2 stretches are compositionally biased toward low complexity: residues 201–233 and 249–266; these read GDTTDTSSGATDSTSYQNNSMLGNGSNGSGANN and ANNNSNTNTSNSATPAAR. Residues 284–347 form the bZIP domain; it reads EEKRRIRRER…NQLKYVIEAH (64 aa). A basic motif region spans residues 286 to 305; that stretch reads KRRIRRERNKAAAARCRKRR. A leucine-zipper region spans residues 312–340; sequence LTEEVDALVKKGDTLKAEITTLTELRNQL. The tract at residues 375–414 is disordered; sequence STGGSSCGSVHSNHSHNNNNNNNNSNDSSSGTITGFDATL. Residues 377 to 405 show a composition bias toward low complexity; that stretch reads GGSSCGSVHSNHSHNNNNNNNNSNDSSSG. Ser422 bears the Phosphoserine mark. 2 disordered regions span residues 447–466 and 590–620; these read GLDSESSSLDQDGPPPAKRA and SGPLIPNCSSQNKHPLELPTPTTEPSKLCPL.

Belongs to the bZIP family. Fos subfamily. In terms of assembly, homodimer. Heterodimer with Jra. The kay-Jra heterodimer binds more stably to the AP-1 site than either of the two proteins alone.

The protein resides in the nucleus. Developmentally regulated transcription factor AP-1 binds and recognizes the enhancer DNA sequence: 5'-TGA[CG]TCA-3'. May play a role in the function or determination of a particular subset of cells in the developing embryo. It is able to carry out its function either independently of or in conjunction with Jra. This chain is Transcription factor kayak, found in Drosophila willistoni (Fruit fly).